Reading from the N-terminus, the 292-residue chain is Protoheme IX farnesyltransferase (292 aa).

The next 9 membrane-spanning stretches (helical) occupy residues 13-33, 35-55, 84-104, 106-126, 135-155, 161-181, 206-226, 231-251, and 263-283; these read ILFGNFITTLGGFFLAAQGHV, FLLLILTLLGTTFVVASGCVV, TALIFAFILGIIGFGILWFWV, PYSFSFAIIGFVVYVGFYSLW, TIIGSISGASPPVIGYTAVTH, ALLIFLAYGLWQMPHSWAIAI, VECLIYIVLFAAVLNGLYCFG, FFLLTFNVLTAYWLYLSIIGF, and LFLFSVILITLLSLSFSFTYQ.

This sequence belongs to the UbiA prenyltransferase family. Protoheme IX farnesyltransferase subfamily.

Its subcellular location is the cell inner membrane. It carries out the reaction heme b + (2E,6E)-farnesyl diphosphate + H2O = Fe(II)-heme o + diphosphate. Its pathway is porphyrin-containing compound metabolism; heme O biosynthesis; heme O from protoheme: step 1/1. Its function is as follows. Converts heme B (protoheme IX) to heme O by substitution of the vinyl group on carbon 2 of heme B porphyrin ring with a hydroxyethyl farnesyl side group. The sequence is that of Protoheme IX farnesyltransferase from Acinetobacter baylyi (strain ATCC 33305 / BD413 / ADP1).